The chain runs to 1170 residues: Glucose transport transcription regulator RGT1 (1170 aa).

Positions 1 to 22 are enriched in polar residues; sequence MNELNTVSTNSSDSTKNGGTSN. The tract at residues 1 to 46 is disordered; sequence MNELNTVSTNSSDSTKNGGTSNSPDDMDSAAAASHAIKKRTKASRA. The zn(2)-C6 fungal-type DNA-binding region spans 47 to 76; sequence CDQCRKKKIKCDYKDEKGVCSNCQRNGDRC. The tract at residues 77–148 is disordered; it reads SFDRVPLKRG…VPSTPSRSNS (72 aa). Residues 99–108 show a composition bias toward basic and acidic residues; sequence RTNEIQDHNN. Low complexity predominate over residues 113-138; that stretch reads NTFDNSNNTLNNNTGNSGDNGINSNT. Over residues 139–148 the composition is skewed to polar residues; the sequence is VPSTPSRSNS. Phosphoserine occurs at positions 202, 205, 208, and 229. Over residues 217 to 234 the composition is skewed to polar residues; that stretch reads PNEQLSYNTVQQSPITNK. Disordered regions lie at residues 217–254, 269–288, 293–343, 384–506, 725–757, and 946–974; these read PNEQ…SASG, APTD…IPSL, SNSL…PSIS, AQQT…HPMT, DEEA…NSPN, and RPPN…GNLN. Over residues 239 to 250 the composition is skewed to low complexity; that stretch reads SGNANGSVTGSG. Residues 271–280 show a composition bias toward basic and acidic residues; the sequence is TDDHNGEQTR. Residues Ser283 and Ser284 each carry the phosphoserine modification. Composition is skewed to low complexity over residues 293-302, 309-341, and 385-397; these read SNSLLLGGQP, QQSQ…YNPS, and QQTQ…QVPQ. Phosphoserine occurs at positions 410 and 414. The span at 411–422 shows a compositional bias: polar residues; it reads APVSVTLSTDRL. Residues 424–444 show a composition bias toward low complexity; that stretch reads GNENNNGEINNNNGSNNSGSS. Residues 445-457 are compositionally biased toward polar residues; the sequence is KDTSQHSQESVTT. The span at 473–488 shows a compositional bias: basic residues; sequence STKKRRKSYVSKKTKP. Residues 493-506 show a composition bias toward polar residues; sequence SISITSKDSAHPMT. Residue Ser1130 is modified to Phosphoserine.

This sequence belongs to the EDS1/RGT1 family. Glucose-induced phosphorylation regulates the DNA-binding activity. Hyperphosphorylation in cells growing on high levels of glucose does prevents DNA-binding and dephosphorylation restores DNA-binding ability.

Its subcellular location is the nucleus. The protein resides in the cytoplasm. In terms of biological role, glucose-responsive transcription factor that regulates expression of several glucose transporter (HXT) genes in response to glucose. In the absence of glucose, it functions as a transcriptional repressor, whereas high concentrations of glucose cause it to function as a transcriptional activator. In cells growing on low levels of glucose, has a neutral role, neither repressing nor activating transcription. Binds the consensus binding site sequence 5'-CGGANNA-3', of which multiple copies are present in all HXT promoters regulated by RGT1. This Saccharomyces cerevisiae (strain YJM789) (Baker's yeast) protein is Glucose transport transcription regulator RGT1 (RGT1).